The following is a 232-amino-acid chain: Large ribosomal subunit protein uL1 (232 aa).

The protein belongs to the universal ribosomal protein uL1 family. In terms of assembly, part of the 50S ribosomal subunit.

In terms of biological role, binds directly to 23S rRNA. The L1 stalk is quite mobile in the ribosome, and is involved in E site tRNA release. Functionally, protein L1 is also a translational repressor protein, it controls the translation of the L11 operon by binding to its mRNA. In Rhizobium rhizogenes (strain K84 / ATCC BAA-868) (Agrobacterium radiobacter), this protein is Large ribosomal subunit protein uL1.